The primary structure comprises 166 residues: Small ribosomal subunit protein uS5 (166 aa).

The S5 DRBM domain occupies 11–74; that stretch reads LVEKLVAVDR…EAARRNMITV (64 aa).

Belongs to the universal ribosomal protein uS5 family. As to quaternary structure, part of the 30S ribosomal subunit. Contacts proteins S4 and S8.

With S4 and S12 plays an important role in translational accuracy. Functionally, located at the back of the 30S subunit body where it stabilizes the conformation of the head with respect to the body. This is Small ribosomal subunit protein uS5 from Acinetobacter baumannii (strain ATCC 17978 / DSM 105126 / CIP 53.77 / LMG 1025 / NCDC KC755 / 5377).